Consider the following 334-residue polypeptide: 2,3-bisphosphoglycerate-dependent phosphoglycerate mutase 1 (334 aa).

The N-terminal 48 residues, 1-48 (MATATSHQSVVSFASLRSSPSSTISQCGFKIDSSLSFTSKKTNFCKIK), are a transit peptide targeting the chloroplast. Substrate-binding positions include 84–91 (RHGESLWN), 97–98 (TG), Arg-134, 188–191 (ERMY), Lys-199, 215–216 (RR), and 259–260 (GN). The active-site Tele-phosphohistidine intermediate is the His-85. Glu-188 acts as the Proton donor/acceptor in catalysis.

The protein belongs to the phosphoglycerate mutase family. BPG-dependent PGAM subfamily.

The protein localises to the plastid. The protein resides in the chloroplast. The catalysed reaction is (2R)-2-phosphoglycerate = (2R)-3-phosphoglycerate. The protein operates within carbohydrate degradation; glycolysis; pyruvate from D-glyceraldehyde 3-phosphate: step 3/5. In terms of biological role, catalyzes the interconversion of 2-phosphoglycerate and 3-phosphoglycerate. The polypeptide is 2,3-bisphosphoglycerate-dependent phosphoglycerate mutase 1 (Arabidopsis thaliana (Mouse-ear cress)).